The primary structure comprises 62 residues: Photosystem II reaction center protein Z (62 aa).

The next 2 helical transmembrane spans lie at 8-28 (TMFA…ITFA) and 41-61 (FSGV…NSFI).

This sequence belongs to the PsbZ family. As to quaternary structure, PSII is composed of 1 copy each of membrane proteins PsbA, PsbB, PsbC, PsbD, PsbE, PsbF, PsbH, PsbI, PsbJ, PsbK, PsbL, PsbM, PsbT, PsbY, PsbZ, Psb30/Ycf12, at least 3 peripheral proteins of the oxygen-evolving complex and a large number of cofactors. It forms dimeric complexes.

The protein localises to the plastid. It is found in the chloroplast thylakoid membrane. Functionally, may control the interaction of photosystem II (PSII) cores with the light-harvesting antenna, regulates electron flow through the 2 photosystem reaction centers. PSII is a light-driven water plastoquinone oxidoreductase, using light energy to abstract electrons from H(2)O, generating a proton gradient subsequently used for ATP formation. This Welwitschia mirabilis (Tree tumbo) protein is Photosystem II reaction center protein Z.